The chain runs to 229 residues: MASSNFFLLIPLIALVTTQAMASDPSPLQDLCVADKNSPVRVNGFPCKDAKDVSVDDFFLAANLDKPMDITKSKAGSNVTLINVMKLAGLNTLGISMARIDYAPKGQNPPHTHPRATEILSVIEGSLYVGFVTSNQANGENKLFTKTLNKGDVFVFPEGLIHFQFNPSYDKPAAAIVALSSQNPGAITIANAVFGSNPPISDDVLAKAFQVDKKAVDWLQAQFWENNHN.

The first 22 residues, 1–22 (MASSNFFLLIPLIALVTTQAMA), serve as a signal peptide directing secretion. Cys32 and Cys47 form a disulfide bridge. One can recognise a Cupin type-1 domain in the interval 62–217 (ANLDKPMDIT…AFQVDKKAVD (156 aa)). Asn78 carries an N-linked (GlcNAc...) asparagine glycan. Mn(2+)-binding residues include His111, His113, Glu118, and His162.

Belongs to the germin family. In terms of assembly, oligomer (believed to be a pentamer but probably hexamer).

The protein resides in the secreted. It is found in the extracellular space. Its subcellular location is the apoplast. Its function is as follows. May play a role in plant defense. Probably has no oxalate oxidase activity even if the active site is conserved. This is Putative germin-like protein 12-3 from Oryza sativa subsp. japonica (Rice).